The primary structure comprises 106 residues: Gibberellin-regulated protein 4 (106 aa).

Residues 1–25 form the signal peptide; it reads MAKSYGAIFLLTLIVLFMLQTMVMA.

Belongs to the GASA family. In terms of processing, six disulfide bonds may be present. In terms of tissue distribution, expressed in flower buds, style, stamen filaments, vasculature of petals, root phloem, vasculature of cotyledons and rosette leaves and developing embryo.

It localises to the secreted. In terms of biological role, gibberellin-regulated protein involved in the regulation of floral meristem and floral organ identity, and promotion of seed size and weight. May play a role in the promotion of gibberellin responses such as regulation of flowering under short-day conditions, seed germination and inhibition of gibberellin oxidase. Possesses redox activity in E.coli and may function in redox regulation in planta. This chain is Gibberellin-regulated protein 4 (GASA4), found in Arabidopsis thaliana (Mouse-ear cress).